Reading from the N-terminus, the 690-residue chain is Polyribonucleotide nucleotidyltransferase (690 aa).

2 residues coordinate Mg(2+): Asp-483 and Asp-489. Positions 550–609 constitute a KH domain; that stretch reads PKMEQITVDKKDIAAVIGKGGATIREIVEKSGAKLDVNDEGVVTVAAPDEESRNIAMQMI. An S1 motif domain is found at 619-686; that stretch reads NKIYSGKVMK…DRGKVKLSMK (68 aa).

Belongs to the polyribonucleotide nucleotidyltransferase family. Requires Mg(2+) as cofactor.

It is found in the cytoplasm. The enzyme catalyses RNA(n+1) + phosphate = RNA(n) + a ribonucleoside 5'-diphosphate. Functionally, involved in mRNA degradation. Catalyzes the phosphorolysis of single-stranded polyribonucleotides processively in the 3'- to 5'-direction. The chain is Polyribonucleotide nucleotidyltransferase from Pelagibacter ubique (strain HTCC1062).